Reading from the N-terminus, the 371-residue chain is Chaperone protein DnaJ (371 aa).

Residues 5–70 form the J domain; it reads DYYEVLGVNR…QKRAAYDQYG (66 aa). The segment at 31 to 52 is disordered; sequence KYHPDRNPDNPKAEESFKEAKE. Basic and acidic residues predominate over residues 32–52; that stretch reads YHPDRNPDNPKAEESFKEAKE. A CR-type zinc finger spans residues 132–210; the sequence is RTETKIRIPV…CQGAGRVKKH (79 aa). Residues Cys145, Cys148, Cys162, Cys165, Cys184, Cys187, Cys198, and Cys201 each contribute to the Zn(2+) site. CXXCXGXG motif repeat units follow at residues 145 to 152, 162 to 169, 184 to 191, and 198 to 205; these read CETCHGSG, CTTCGGHG, CPKCHGSG, and CPSCQGAG.

This sequence belongs to the DnaJ family. Homodimer. The cofactor is Zn(2+).

It localises to the cytoplasm. Its function is as follows. Participates actively in the response to hyperosmotic and heat shock by preventing the aggregation of stress-denatured proteins and by disaggregating proteins, also in an autonomous, DnaK-independent fashion. Unfolded proteins bind initially to DnaJ; upon interaction with the DnaJ-bound protein, DnaK hydrolyzes its bound ATP, resulting in the formation of a stable complex. GrpE releases ADP from DnaK; ATP binding to DnaK triggers the release of the substrate protein, thus completing the reaction cycle. Several rounds of ATP-dependent interactions between DnaJ, DnaK and GrpE are required for fully efficient folding. Also involved, together with DnaK and GrpE, in the DNA replication of plasmids through activation of initiation proteins. In Methylovorus sp. (strain SS1 / DSM 11726), this protein is Chaperone protein DnaJ.